Reading from the N-terminus, the 303-residue chain is Energy-coupling factor transporter ATP-binding protein EcfA2 (303 aa).

In terms of domain architecture, ABC transporter spans 17–260; it reads LSVSNLSCFF…EAFLAHTTII (244 aa). 54 to 61 is a binding site for ATP; it reads GDSGSGKS.

This sequence belongs to the ABC transporter superfamily. Energy-coupling factor EcfA family. As to quaternary structure, forms a stable energy-coupling factor (ECF) transporter complex composed of 2 membrane-embedded substrate-binding proteins (S component), 2 ATP-binding proteins (A component) and 2 transmembrane proteins (T component).

Its subcellular location is the cell membrane. Its function is as follows. ATP-binding (A) component of a common energy-coupling factor (ECF) ABC-transporter complex. Unlike classic ABC transporters this ECF transporter provides the energy necessary to transport a number of different substrates. This chain is Energy-coupling factor transporter ATP-binding protein EcfA2, found in Mycoplasma pneumoniae (strain ATCC 29342 / M129 / Subtype 1) (Mycoplasmoides pneumoniae).